A 343-amino-acid polypeptide reads, in one-letter code: MRLSDFDFELPEELIAQHPLAQRQASRLMVLNRVTQQLQLAQFADIADWFRPGDVLVVNDTRVIPARLIGRKQTGGRIEVFLVRRLPGVEEVWACLTKCSKSPRPGTRLILGEGLEGTVVEGGEPPYRHVRFSFQGDFSQVLEQVGRIPLPPYIRREATPDDRSRYQTVFAREAGAVAAPTAGLHFTDEILDVLRAKGVEIQPLTLHVGLGTFLPMRTDDITEHRMHEENYFVPEGTAAAVNRAKDDGRRVIALGTTSTRTLEYAVDEQGRLQAGAGTCDLFIRPGFKFRIVDGLVTNFHLPCSTLLVLVAALAGREFILEAYQRAVAEKFRFFSYGDCMLIL.

Belongs to the QueA family. In terms of assembly, monomer.

It localises to the cytoplasm. The enzyme catalyses 7-aminomethyl-7-carbaguanosine(34) in tRNA + S-adenosyl-L-methionine = epoxyqueuosine(34) in tRNA + adenine + L-methionine + 2 H(+). It participates in tRNA modification; tRNA-queuosine biosynthesis. Functionally, transfers and isomerizes the ribose moiety from AdoMet to the 7-aminomethyl group of 7-deazaguanine (preQ1-tRNA) to give epoxyqueuosine (oQ-tRNA). This chain is S-adenosylmethionine:tRNA ribosyltransferase-isomerase, found in Syntrophotalea carbinolica (strain DSM 2380 / NBRC 103641 / GraBd1) (Pelobacter carbinolicus).